The following is a 217-amino-acid chain: THAP domain-containing protein 2 (217 aa).

A THAP-type zinc finger spans residues 1–80 (MPTNCAAAGC…LKMDAVPTIF (80 aa)). The short motif at 122–125 (EHSY) is the HCFC1-binding motif (HBM) element.

This Mus musculus (Mouse) protein is THAP domain-containing protein 2 (Thap2).